Here is a 320-residue protein sequence, read N- to C-terminus: o-succinylbenzoate synthase (320 aa).

The active-site Proton donor is Lys-133. Mg(2+)-binding residues include Asp-161, Glu-190, and Asp-213. The active-site Proton acceptor is the Lys-235.

It belongs to the mandelate racemase/muconate lactonizing enzyme family. MenC type 1 subfamily. A divalent metal cation is required as a cofactor.

The enzyme catalyses (1R,6R)-6-hydroxy-2-succinyl-cyclohexa-2,4-diene-1-carboxylate = 2-succinylbenzoate + H2O. It functions in the pathway quinol/quinone metabolism; 1,4-dihydroxy-2-naphthoate biosynthesis; 1,4-dihydroxy-2-naphthoate from chorismate: step 4/7. It participates in quinol/quinone metabolism; menaquinone biosynthesis. Converts 2-succinyl-6-hydroxy-2,4-cyclohexadiene-1-carboxylate (SHCHC) to 2-succinylbenzoate (OSB). This chain is o-succinylbenzoate synthase, found in Escherichia coli O81 (strain ED1a).